The primary structure comprises 218 residues: MASRGGGRGCGRGQLTFNVEAVGIGKGDALPPPTLQPSPLFPPLEFRPVPLPSGEEGEYVLALKQELRGAMRQLPYFIRPAVPKRDVERYSDKYQMSGPIDNAIDWNPDWRRLPRELKIRVRKLQKERTTIILPKRPPKTTEDKEETIQKLETLEKKEEEVTSEEDEEKEEEEEKEEEEEEEYDEEEHEEETDYIMSYFDNGEDFGGDSDDNMDEAIY.

A disordered region spans residues 130–218 (TIILPKRPPK…SDDNMDEAIY (89 aa)). A compositionally biased stretch (basic and acidic residues) spans 139-160 (KTTEDKEETIQKLETLEKKEEE). 2 stretches are compositionally biased toward acidic residues: residues 161-193 (VTSE…EETD) and 201-218 (NGED…EAIY).

The protein belongs to the eukaryotic RPC7 RNA polymerase subunit family. Component of the RNA polymerase III (Pol III) complex consisting of 17 subunits. Pol III exists as two alternative complexes defined by the mutually exclusive incorporation of subunit POLR3G/RPC7alpha or POLR3GL/RPC7beta. Found in a trimeric complex with POLR3C/RPC3 and POLR3F/RPC6. Directly interacts with POLR3C.

The protein localises to the nucleus. Functionally, DNA-dependent RNA polymerase catalyzes the transcription of DNA into RNA using the four ribonucleoside triphosphates as substrates. Specific peripheric component of RNA polymerase III which synthesizes small RNAs, such as 5S rRNA and tRNAs. This Bos taurus (Bovine) protein is DNA-directed RNA polymerase III subunit RPC7-like (POLR3GL).